The primary structure comprises 141 residues: Hemoglobin subunit alpha-2 (141 aa).

A Globin domain is found at 1–141 (VLTDAERKEV…VATVLTSKYR (141 aa)). H58 serves as a coordination point for O2. Residue H87 coordinates heme b.

It belongs to the globin family. Heterotetramer of two alpha chains and two beta chains. Red blood cells.

Its function is as follows. Involved in oxygen transport from the lung to the various peripheral tissues. The polypeptide is Hemoglobin subunit alpha-2 (Tachyglossus aculeatus aculeatus (Southeast Australian short-beaked echidna)).